The primary structure comprises 157 residues: 2-C-methyl-D-erythritol 2,4-cyclodiphosphate synthase (157 aa).

A divalent metal cation contacts are provided by Asp-8 and His-10. 4-CDP-2-C-methyl-D-erythritol 2-phosphate contacts are provided by residues 8–10 (DVH) and 34–35 (HS). Position 42 (His-42) interacts with a divalent metal cation. 4-CDP-2-C-methyl-D-erythritol 2-phosphate is bound by residues 56–58 (DIG), 61–65 (FPDTD), 132–135 (TTEE), and Phe-139.

This sequence belongs to the IspF family. Homotrimer. A divalent metal cation is required as a cofactor.

It carries out the reaction 4-CDP-2-C-methyl-D-erythritol 2-phosphate = 2-C-methyl-D-erythritol 2,4-cyclic diphosphate + CMP. It functions in the pathway isoprenoid biosynthesis; isopentenyl diphosphate biosynthesis via DXP pathway; isopentenyl diphosphate from 1-deoxy-D-xylulose 5-phosphate: step 4/6. In terms of biological role, involved in the biosynthesis of isopentenyl diphosphate (IPP) and dimethylallyl diphosphate (DMAPP), two major building blocks of isoprenoid compounds. Catalyzes the conversion of 4-diphosphocytidyl-2-C-methyl-D-erythritol 2-phosphate (CDP-ME2P) to 2-C-methyl-D-erythritol 2,4-cyclodiphosphate (ME-CPP) with a corresponding release of cytidine 5-monophosphate (CMP). This Clostridium botulinum (strain Alaska E43 / Type E3) protein is 2-C-methyl-D-erythritol 2,4-cyclodiphosphate synthase.